The sequence spans 331 residues: NAD-dependent protein deacetylase HST2 (331 aa).

The 262-residue stretch at 1–262 folds into the Deacetylase sirtuin-type domain; sequence MPSLDDILKP…EKLCTLLGLD (262 aa). NAD(+) is bound by residues 26–46 and 109–112; these read GAGISTGAGIPDFRSPDTGLY and QNID. His129 (proton acceptor) is an active-site residue. Residues Cys137, Cys140, Cys161, and Cys164 each coordinate Zn(2+). Residues 201–203, 226–228, and Cys248 each bind NAD(+); these read GTS and NKE. A coiled-coil region spans residues 276–331; it reads YSKAETKETKMHEIEDKLKEEAHLKEDKHTTKVDKKEKQNDANDKELEQLIDKLKI. The interval 283-319 is disordered; it reads ETKMHEIEDKLKEEAHLKEDKHTTKVDKKEKQNDAND.

It belongs to the sirtuin family. Class I subfamily. Zn(2+) serves as cofactor.

It localises to the cytoplasm. Its subcellular location is the nucleus. It carries out the reaction N(6)-acetyl-L-lysyl-[protein] + NAD(+) + H2O = 2''-O-acetyl-ADP-D-ribose + nicotinamide + L-lysyl-[protein]. Functionally, NAD-dependent histone deacetylase that is involved in nuclear silencing events. Derepresses subtelomeric silencing and increases repression in nucleolar (rDNA) silencing. Its function is negatively regulated by active nuclear export. This chain is NAD-dependent protein deacetylase HST2 (HST2), found in Candida albicans (strain SC5314 / ATCC MYA-2876) (Yeast).